A 227-amino-acid chain; its full sequence is 4-nitrobenzoate reductase (227 aa).

An FMN-binding site is contributed by 15–19 (RRAVR). 3 residues coordinate NAD(+): Ser45, Tyr102, and Ile107. Residue Arg213 participates in FMN binding.

The protein belongs to the nitroreductase family. The cofactor is FMN.

The enzyme catalyses 4-nitrobenzoate + 2 NADH + 2 H(+) = 4-hydroxylaminobenzoate + 2 NAD(+) + H2O. Functionally, nitroreductase involved in the degradation of nitroaromatic compounds. Catalyzes the conversion of 4-nitrobenzoate to 4-hydroxylaminobenzoate. Required for the catabolism of 4-nitrotoluene. In Pseudomonas putida (Arthrobacter siderocapsulatus), this protein is 4-nitrobenzoate reductase.